The following is a 520-amino-acid chain: T-box transcription factor TBX22 (520 aa).

The tract at residues 1–91 (MALSSRARAF…NSSESLEEKD (91 aa)) is disordered. The span at 33–49 (PELREKKGGEEEEERRS) shows a compositional bias: basic and acidic residues. Residues 67–84 (STSASSGCGSDSGYGNSS) show a composition bias toward low complexity. Positions 96 to 283 (LQGSELWKRF…RNPFAKGFRD (188 aa)) form a DNA-binding region, T-box.

In terms of tissue distribution, seems to be expressed at a low level.

It localises to the nucleus. Its function is as follows. Probable transcriptional regulator involved in developmental processes. This is major determinant crucial to palatogenesis. This Homo sapiens (Human) protein is T-box transcription factor TBX22 (TBX22).